The chain runs to 75 residues: Psi-conotoxin PIIIE (75 aa).

The first 19 residues, 1–19 (MSKLGALLTICLLLFPITA), serve as a signal peptide directing secretion. A propeptide spanning residues 20-50 (LLMDGDQPADRPAERMDYDISSEVHRLLERR) is cleaved from the precursor. 4-hydroxyproline is present on residues P52, P53, and P64. Intrachain disulfides connect C54–C66, C55–C71, and C60–C72. The residue at position 74 (G74) is a Glycine amide.

In terms of tissue distribution, expressed by the venom duct.

The protein localises to the secreted. Functionally, psi-conotoxins act on postsynaptic membranes, and act as non-competitive antagonist of nicotinic acetylcholine receptors (nAChR). Is more toxic than Psi-conotoxin PIIIF. In vivo, has paralytic activity when injected intraperitoneally into goldfish. The protein is Psi-conotoxin PIIIE of Conus purpurascens (Purple cone).